The chain runs to 395 residues: Thyroid hormone receptor beta (395 aa).

A modulating region spans residues 1 to 31 (MSEQADKCNSRWKDEAMQNGYIPSYLDKDEL). The segment at residues 29 to 106 (DELCVVCGDK…VGMATDLVLD (78 aa)) is a DNA-binding region (nuclear receptor). The Zn(2+) site is built by Cys32, Cys35, Cys49, Cys52, Cys70, Cys76, Cys86, and Cys89. 2 NR C4-type zinc fingers span residues 32–52 (CVVC…CEGC) and 70–89 (CKYE…CQEC). The NR LBD domain occupies 142-395 (EEWEMIRVVT…PPLFLEVFED (254 aa)). 3,3',5-triiodo-L-thyronine contacts are provided by Arg216, Asn265, and His369.

Belongs to the nuclear hormone receptor family. NR1 subfamily. Interacts (via the ligand-binding domain) with ncoa2. Widely expressed in a range of adult tissues including the brain, eye, fin, gill, intestine, liver, swim bladder and ovary. In the eye, expressed in the outer nuclear layer of the retina.

It localises to the nucleus. In terms of biological role, nuclear hormone receptor that can act as a repressor or activator of transcription. High affinity receptor for the thyroid gland hormone triiodothyronine (T3). Transactivating activity is ligand-dependent, and is repressed in the absence of T3. This Danio rerio (Zebrafish) protein is Thyroid hormone receptor beta (thrb).